The chain runs to 342 residues: N-acetyl-gamma-glutamyl-phosphate reductase (342 aa).

Residue cysteine 149 is part of the active site.

This sequence belongs to the NAGSA dehydrogenase family. Type 1 subfamily.

The protein resides in the cytoplasm. It catalyses the reaction N-acetyl-L-glutamate 5-semialdehyde + phosphate + NADP(+) = N-acetyl-L-glutamyl 5-phosphate + NADPH + H(+). It participates in amino-acid biosynthesis; L-arginine biosynthesis; N(2)-acetyl-L-ornithine from L-glutamate: step 3/4. Functionally, catalyzes the NADPH-dependent reduction of N-acetyl-5-glutamyl phosphate to yield N-acetyl-L-glutamate 5-semialdehyde. This chain is N-acetyl-gamma-glutamyl-phosphate reductase, found in Jannaschia sp. (strain CCS1).